Reading from the N-terminus, the 352-residue chain is C-C chemokine receptor type 5 (352 aa).

The Extracellular segment spans residues 1–30 (MDYQVSSPTYDIDYYTSEPCQKINVKQIAA). Position 3 is a sulfotyrosine (Tyr3). O-linked (GalNAc...) serine glycans are attached at residues Ser6 and Ser7. Sulfotyrosine occurs at positions 10, 14, and 15. 2 disulfides stabilise this stretch: Cys20–Cys269 and Cys101–Cys178. A helical membrane pass occupies residues 31 to 58 (RLLPPLYSLVFIFGFVGNMLVILILINC). Residues 59–68 (KRLKSMTDIY) are Cytoplasmic-facing. The chain crosses the membrane as a helical span at residues 69–89 (LLNLAISDLFFLLTVPFWAHY). The Extracellular segment spans residues 90–102 (AAAQWDFGNTMCQ). The helical transmembrane segment at 103-124 (LLTGLYFIGFFSGIFFIILLTI) threads the bilayer. Residues 125–141 (DRYLAIVHAVFALKART) are Cytoplasmic-facing. The helical transmembrane segment at 142 to 166 (VTFGVVTSVITWVVAVFASLPGIIF) threads the bilayer. Residues 167-198 (TRSQKEGLHYTCSSHFPYSQYQFWKNFQTLKI) are Extracellular-facing. A helical membrane pass occupies residues 199–218 (VILGLVLPLLVMVICYSGIL). The Cytoplasmic portion of the chain corresponds to 219-235 (KTLLRCRNEKKRHRAVR). The chain crosses the membrane as a helical span at residues 236–260 (LIFTIMIVYFLFWAPYNIVLLLNTF). The Extracellular portion of the chain corresponds to 261-277 (QEFFGLNNCSSSNRLDQ). A helical membrane pass occupies residues 278–301 (AMQVTETLGMTHCCINPIIYAFVG). The Cytoplasmic portion of the chain corresponds to 302–352 (EKFRNYLLVFFQKHIAKRFCKCCSIFQQEAPERASSVYTRSTGEQEISVGL). S-palmitoyl cysteine attachment occurs at residues Cys321, Cys323, and Cys324. Residues Ser336, Ser337, Ser342, and Ser349 each carry the phosphoserine; by BARK1 modification.

The protein belongs to the G-protein coupled receptor 1 family. As to quaternary structure, interacts with PRAF2. Efficient ligand binding to CCL3/MIP-1alpha and CCL4/MIP-1beta requires sulfation, O-glycosylation and sialic acid modifications. Glycosylation on Ser-6 is required for efficient binding of CCL4. Interacts with GRK2. Interacts with ARRB1 and ARRB2. Interacts with CNIH4. Interacts with S100A4; this interaction stimulates T-lymphocyte chemotaxis. Post-translationally, sulfated on at least 2 of the N-terminal tyrosines. Sulfation is required for efficient binding of the chemokines, CCL3 and CCL4. In terms of processing, palmitoylation in the C-terminal is important for cell surface expression. Phosphorylation on serine residues in the C-terminal is stimulated by binding CC chemokines especially by APO-RANTES. Post-translationally, O-glycosylated, but not N-glycosylated. Ser-6 appears to be the major site even if Ser-7 may be also O-glycosylated. Also sialylated glycans present which contribute to chemokine binding. Thr-16 and Ser-17 may also be glycosylated and, if so, with small moieties such as a T-antigen.

It is found in the cell membrane. Receptor for a number of inflammatory CC-chemokines including CCL3/MIP-1-alpha, CCL4/MIP-1-beta and RANTES and subsequently transduces a signal by increasing the intracellular calcium ion level. May play a role in the control of granulocytic lineage proliferation or differentiation. Participates in T-lymphocyte migration to the infection site by acting as a chemotactic receptor. This Pongo abelii (Sumatran orangutan) protein is C-C chemokine receptor type 5 (CCR5).